Here is a 463-residue protein sequence, read N- to C-terminus: General transcription factor IIH subunit 4 (463 aa).

Belongs to the TFB2 family. Component of the 7-subunit TFIIH core complex composed of XPB/ERCC3, XPD/ERCC2, GTF2H1, GTF2H2, GTF2H3, GTF2H4 and GTF2H5, which is active in NER. The core complex associates with the 3-subunit CDK-activating kinase (CAK) module composed of CCNH/cyclin H, CDK7 and MNAT1 to form the 10-subunit holoenzyme (holo-TFIIH) active in transcription. Part of TBP-based Pol II pre-initiation complex (PIC), in which Pol II core assembles with general transcription factors and other specific initiation factors including GTF2E1, GTF2E2, GTF2F1, GTF2F2, TCEA1, ERCC2, ERCC3, GTF2H2, GTF2H3, GTF2H4, GTF2H5, GTF2A1, GTF2A2, GTF2B and TBP; this large multi-subunit PIC complex mediates DNA unwinding and targets Pol II core to the transcription start site where the first phosphodiester bond forms.

The protein resides in the nucleus. In terms of biological role, component of the general transcription and DNA repair factor IIH (TFIIH) core complex, which is involved in general and transcription-coupled nucleotide excision repair (NER) of damaged DNA and, when complexed to CAK, in RNA transcription by RNA polymerase II. In NER, TFIIH acts by opening DNA around the lesion to allow the excision of the damaged oligonucleotide and its replacement by a new DNA fragment. In transcription, TFIIH has an essential role in transcription initiation. When the pre-initiation complex (PIC) has been established, TFIIH is required for promoter opening and promoter escape. Phosphorylation of the C-terminal tail (CTD) of the largest subunit of RNA polymerase II by the kinase module CAK controls the initiation of transcription. This Mus musculus (Mouse) protein is General transcription factor IIH subunit 4 (Gtf2h4).